We begin with the raw amino-acid sequence, 108 residues long: DNA-binding protein HBbu (108 aa).

Belongs to the bacterial histone-like protein family.

Histone-like DNA-binding protein which is capable of wrapping DNA to stabilize it, and thus to prevent its denaturation under extreme environmental conditions. The protein is DNA-binding protein HBbu (hbb) of Borreliella afzelii (Borrelia afzelii).